The following is a 955-amino-acid chain: Protein translocase subunit SecA (955 aa).

Residues Gln87, 105 to 109 (GEGKT), and Asp494 contribute to the ATP site. The disordered stretch occupies residues 861 to 955 (ASPAPAAPRP…KKAPRTKRKR (95 aa)). Residues 874-888 (QEAAQQAQGTAAPSA) show a composition bias toward low complexity. Residues 943-955 (SKGKKAPRTKRKR) are compositionally biased toward basic residues.

This sequence belongs to the SecA family. Monomer and homodimer. Part of the essential Sec protein translocation apparatus which comprises SecA, SecYEG and auxiliary proteins SecDF. Other proteins may also be involved.

It is found in the cell membrane. Its subcellular location is the cytoplasm. The catalysed reaction is ATP + H2O + cellular proteinSide 1 = ADP + phosphate + cellular proteinSide 2.. Functionally, part of the Sec protein translocase complex. Interacts with the SecYEG preprotein conducting channel. Has a central role in coupling the hydrolysis of ATP to the transfer of proteins into and across the cell membrane, serving as an ATP-driven molecular motor driving the stepwise translocation of polypeptide chains across the membrane. The polypeptide is Protein translocase subunit SecA (Rhodococcus jostii (strain RHA1)).